Consider the following 373-residue polypeptide: Glutamate 5-kinase (373 aa).

Residue lysine 15 participates in ATP binding. Residues serine 54, aspartate 141, and asparagine 153 each contribute to the substrate site. ATP is bound by residues 173 to 174 (SD) and 215 to 221 (TGGMATK). Residues 280–358 (RGKLLVDEGA…SEIEVVLGYK (79 aa)) form the PUA domain.

The protein belongs to the glutamate 5-kinase family.

It is found in the cytoplasm. It catalyses the reaction L-glutamate + ATP = L-glutamyl 5-phosphate + ADP. Its pathway is amino-acid biosynthesis; L-proline biosynthesis; L-glutamate 5-semialdehyde from L-glutamate: step 1/2. Functionally, catalyzes the transfer of a phosphate group to glutamate to form L-glutamate 5-phosphate. This Syntrophotalea carbinolica (strain DSM 2380 / NBRC 103641 / GraBd1) (Pelobacter carbinolicus) protein is Glutamate 5-kinase.